Here is a 194-residue protein sequence, read N- to C-terminus: MESKSSSSSLPLFALFNFFLISFCRWVSSTRIFLSRFVPLLQHHQRVFDKKNNKDQQETLTKQEDDDDDDDDDDDDDDDDIDISREEAEMVMRSLGLFYNDDQLQEQYSAKEVSSLFEEKEASLEEVKQAFDVFDENKDGFIDAIELQRVLTILGFKQGSYLDNCLVMIRSLDGNKDGKIDFNEFVKFMETSFY.

Basic and acidic residues predominate over residues 52–63 (NNKDQQETLTKQ). Positions 52 to 81 (NNKDQQETLTKQEDDDDDDDDDDDDDDDDI) are disordered. Over residues 64-81 (EDDDDDDDDDDDDDDDDI) the composition is skewed to acidic residues. 3 consecutive EF-hand domains span residues 76–98 (DDDDDIDISREEAEMVMRSLGLF), 122–157 (ASLEEVKQAFDVFDENKDGFIDAIELQRVLTILGFK), and 160–194 (SYLDNCLVMIRSLDGNKDGKIDFNEFVKFMETSFY). Positions 135, 137, 139, 146, 173, 175, 177, 179, and 184 each coordinate Ca(2+).

Its function is as follows. Potential calcium sensor. This Arabidopsis thaliana (Mouse-ear cress) protein is Probable calcium-binding protein CML45.